The primary structure comprises 541 residues: Cyclin-T1-4 (541 aa).

Residues 277 to 366 (VSEVESSVGG…KSRSGVEAPG (90 aa)) are disordered. Over residues 307-325 (SDNLGGSTKATQNRSNDNG) the composition is skewed to polar residues. The segment covering 336-354 (QKGERDTETKDSMHTESHP) has biased composition (basic and acidic residues). The residue at position 396 (Ser396) is a Phosphoserine. Residues 445 to 541 (EDDKDIQNKS…REPRRHSQER (97 aa)) form a disordered region. Residues 493–511 (MESPCEKQLGEGKRRHDNS) are compositionally biased toward basic and acidic residues. Polar residues predominate over residues 519–528 (KTNPGGSSHS). A compositionally biased stretch (basic and acidic residues) spans 529-541 (YGDREPRRHSQER).

It belongs to the cyclin family. Cyclin T subfamily.

In Arabidopsis thaliana (Mouse-ear cress), this protein is Cyclin-T1-4 (CYCT1-4).